Reading from the N-terminus, the 644-residue chain is Exoribonuclease 2 (644 aa).

The RNB domain occupies 189-516; the sequence is REDLTALDFV…NHRLLKAVIK (328 aa). An S1 motif domain is found at 561-643; it reads DTRFAAEIVD…ETRSIIARPV (83 aa).

The protein belongs to the RNR ribonuclease family. RNase II subfamily.

Its subcellular location is the cytoplasm. The enzyme catalyses Exonucleolytic cleavage in the 3'- to 5'-direction to yield nucleoside 5'-phosphates.. Involved in mRNA degradation. Hydrolyzes single-stranded polyribonucleotides processively in the 3' to 5' direction. The polypeptide is Exoribonuclease 2 (Escherichia coli O6:K15:H31 (strain 536 / UPEC)).